A 158-amino-acid polypeptide reads, in one-letter code: 2-C-methyl-D-erythritol 2,4-cyclodiphosphate synthase (158 aa).

A divalent metal cation contacts are provided by aspartate 8 and histidine 10. 4-CDP-2-C-methyl-D-erythritol 2-phosphate-binding positions include 8-10 (DSH) and 34-35 (HS). Residue histidine 42 participates in a divalent metal cation binding. Residues 56–58 (DIG), 61–65 (FPDND), and arginine 142 each bind 4-CDP-2-C-methyl-D-erythritol 2-phosphate.

Belongs to the IspF family. As to quaternary structure, homotrimer. It depends on a divalent metal cation as a cofactor.

The enzyme catalyses 4-CDP-2-C-methyl-D-erythritol 2-phosphate = 2-C-methyl-D-erythritol 2,4-cyclic diphosphate + CMP. The protein operates within isoprenoid biosynthesis; isopentenyl diphosphate biosynthesis via DXP pathway; isopentenyl diphosphate from 1-deoxy-D-xylulose 5-phosphate: step 4/6. Functionally, involved in the biosynthesis of isopentenyl diphosphate (IPP) and dimethylallyl diphosphate (DMAPP), two major building blocks of isoprenoid compounds. Catalyzes the conversion of 4-diphosphocytidyl-2-C-methyl-D-erythritol 2-phosphate (CDP-ME2P) to 2-C-methyl-D-erythritol 2,4-cyclodiphosphate (ME-CPP) with a corresponding release of cytidine 5-monophosphate (CMP). The chain is 2-C-methyl-D-erythritol 2,4-cyclodiphosphate synthase from Brachyspira hyodysenteriae (strain ATCC 49526 / WA1).